A 446-amino-acid polypeptide reads, in one-letter code: sn-2 acyl-lipid omega-3 desaturase (ferredoxin), chloroplastic (446 aa).

The N-terminal 65 residues, 1 to 65 (MANLVLSECG…DGFTRNWALN (65 aa)), are a transit peptide targeting the chloroplast. The next 2 helical transmembrane spans lie at 118–138 (LSYVVRDVAIVFALAAGAAYL) and 141–161 (WIVWPLYWLAQGTMFWALFVL). The short motif at 163 to 167 (HDCGH) is the Histidine box-1 element. The Histidine box-2 motif lies at 199 to 203 (HRTHH). 3 consecutive transmembrane segments (helical) span residues 231-250 (RFFRFTLPLVMLAYPFYLWA), 279-299 (TACWTAMAALLVCLNFTIGPI), and 302-322 (LKLYGIPYWINVMWLDFVTYL). A Histidine box-3 motif is present at residues 366–370 (HVIHH).

This sequence belongs to the fatty acid desaturase type 1 family. Most abundant in leaves and seedlings.

The protein resides in the plastid. Its subcellular location is the chloroplast inner membrane. The enzyme catalyses a (7Z,10Z)-hexadecadienoyl-containing glycerolipid + 2 reduced [2Fe-2S]-[ferredoxin] + O2 + 2 H(+) = a (7Z,10Z,13Z)-hexadecatrienoyl-containing glycerolipid + 2 oxidized [2Fe-2S]-[ferredoxin] + 2 H2O. The catalysed reaction is a (9Z,12Z)-octadecadienoyl-containing glycerolipid + 2 reduced [2Fe-2S]-[ferredoxin] + O2 + 2 H(+) = (9Z,12Z,15Z)-octadecatrienoyl-containing glycerolipid + 2 oxidized [2Fe-2S]-[ferredoxin] + 2 H2O. Its pathway is lipid metabolism; polyunsaturated fatty acid biosynthesis. In terms of biological role, chloroplast omega-3 fatty acid desaturase introduces the third double bond in the biosynthesis of 16:3 and 18:3 fatty acids, important constituents of plant membranes. It is thought to use ferredoxin as an electron donor and to act on fatty acids esterified to galactolipids, sulfolipids and phosphatidylglycerol. The polypeptide is sn-2 acyl-lipid omega-3 desaturase (ferredoxin), chloroplastic (Arabidopsis thaliana (Mouse-ear cress)).